We begin with the raw amino-acid sequence, 202 residues long: ER membrane protein complex subunit 7 homolog (202 aa).

The first 23 residues, Met1–Thr23, serve as a signal peptide directing secretion. The helical transmembrane segment at Ile148 to Pro168 threads the bilayer. The segment at Met179 to Arg202 is disordered. Over residues Ala182–Arg202 the composition is skewed to polar residues.

Belongs to the EMC7 family.

It is found in the membrane. The protein is ER membrane protein complex subunit 7 homolog of Arabidopsis thaliana (Mouse-ear cress).